We begin with the raw amino-acid sequence, 242 residues long: 1-(5-phosphoribosyl)-5-[(5-phosphoribosylamino)methylideneamino] imidazole-4-carboxamide isomerase (242 aa).

The Proton acceptor role is filled by Asp8. Asp129 serves as the catalytic Proton donor.

The protein belongs to the HisA/HisF family.

It is found in the cytoplasm. It catalyses the reaction 1-(5-phospho-beta-D-ribosyl)-5-[(5-phospho-beta-D-ribosylamino)methylideneamino]imidazole-4-carboxamide = 5-[(5-phospho-1-deoxy-D-ribulos-1-ylimino)methylamino]-1-(5-phospho-beta-D-ribosyl)imidazole-4-carboxamide. Its pathway is amino-acid biosynthesis; L-histidine biosynthesis; L-histidine from 5-phospho-alpha-D-ribose 1-diphosphate: step 4/9. The polypeptide is 1-(5-phosphoribosyl)-5-[(5-phosphoribosylamino)methylideneamino] imidazole-4-carboxamide isomerase (Dictyoglomus turgidum (strain DSM 6724 / Z-1310)).